Here is a 548-residue protein sequence, read N- to C-terminus: Druantia protein DruB (548 aa).

Its subcellular location is the cytoplasm. In terms of biological role, component of antiviral defense system Druantia type I, composed of DruA, DruB, DruC, DruD and DruE. Expression of Druantia in E.coli (strain MG1655) confers resistance to phage lambda, SECphi18, SECphi27 and T4. This is Druantia protein DruB from Escherichia coli (strain UMEA 4076-1).